Reading from the N-terminus, the 186-residue chain is GTP cyclohydrolase 1 2 (186 aa).

Belongs to the GTP cyclohydrolase I family. Homomer.

The enzyme catalyses GTP + H2O = 7,8-dihydroneopterin 3'-triphosphate + formate + H(+). The protein operates within cofactor biosynthesis; 7,8-dihydroneopterin triphosphate biosynthesis; 7,8-dihydroneopterin triphosphate from GTP: step 1/1. This is GTP cyclohydrolase 1 2 from Pseudomonas putida (strain ATCC 47054 / DSM 6125 / CFBP 8728 / NCIMB 11950 / KT2440).